An 840-amino-acid chain; its full sequence is Recyclin-1 (840 aa).

The F-box domain maps to 1 to 48 (MDDLLKVPEIVTNIASYLSTVDYLSFQQVNKRVYAIINGKNDSKYWSL). Position 409 is a phosphoserine (S409).

Interacts with SKP1.

It is found in the cytoplasm. It localises to the bud neck. The protein localises to the cell tip. In terms of biological role, involved in recycling plasma membrane proteins internalized by endocytosis. Required for recycling of the v-SNARE SNC1. The chain is Recyclin-1 (RCY1) from Saccharomyces cerevisiae (strain ATCC 204508 / S288c) (Baker's yeast).